Consider the following 367-residue polypeptide: Regulator of fusion ref-1 (367 aa).

The segment covering 1-10 has biased composition (pro residues); it reads MVLISTPPPA. Residues 1–24 form a disordered region; that stretch reads MVLISTPPPAYAHNRKTSQEKKRR. A basic motif 1 region spans residues 11-24; it reads YAHNRKTSQEKKRR. Residues 11-63 enclose the bHLH 1 domain; the sequence is YAHNRKTSQEKKRRDEINAKIKELQLLIQNESDNEKMTQGDVLNRAVEVVSRM. Residues 25-63 are helix-loop-helix motif 1; the sequence is DEINAKIKELQLLIQNESDNEKMTQGDVLNRAVEVVSRM. Disordered stretches follow at residues 133–177 and 313–367; these read RSES…RRDR and ATSP…RPWE. Residues 141–157 show a composition bias toward low complexity; that stretch reads SSMSYRSQSSSPSTSES. The span at 161-177 shows a compositional bias: basic and acidic residues; it reads IDRKEVKKNREQDRRDR. A basic motif 2 region spans residues 162 to 175; that stretch reads DRKEVKKNREQDRR. The bHLH 2 domain occupies 162 to 219; sequence DRKEVKKNREQDRRDRQGEAFDALKNFIIENKLMTSHQVEKMQRLNTLDIIIAYIQNK. Positions 176–219 are helix-loop-helix motif 2; it reads DRQGEAFDALKNFIIENKLMTSHQVEKMQRLNTLDIIIAYIQNK. Positions 313–354 are enriched in low complexity; it reads ATSPKSQQSPSYSLDSPPPSSDTSSSSIETPSTPNENSNSNP. A compositionally biased stretch (basic residues) spans 356–367; the sequence is ASRKSKLFRPWE.

Interacts with unc-37.

The protein localises to the nucleus. Its function is as follows. Probable transcription factor. Binds 5'-TGCCACGTGTCCA-3' in vitro, probably via the E-box motif 5'-CA[TC][AG]TG-3'. Acts in embryonic development in a Notch-dependent manner, perhaps as a direct target of transcriptional regulator lag-1 in the Notch signaling pathway. Also acts in embryonic development in a Notch-independent manner. Plays a role in both Notch-dependent and -independent pathways in the execution of neuronal lineage decisions in the embryo. Also involved in regulating cell fate leading to formation of neuronal structures known as postdeirids. Involved in the pattern of cell fusion with a large syncytium known as hyp-7, during larval development, in hermaphrodites. Plays a role in regulating the activity of homeobox protein mab-5 in Pn.p cells. The polypeptide is Regulator of fusion ref-1 (Caenorhabditis elegans).